The following is a 109-amino-acid chain: Phosphoribosyl-ATP pyrophosphatase (109 aa).

This sequence belongs to the PRA-PH family.

The protein resides in the cytoplasm. The catalysed reaction is 1-(5-phospho-beta-D-ribosyl)-ATP + H2O = 1-(5-phospho-beta-D-ribosyl)-5'-AMP + diphosphate + H(+). It participates in amino-acid biosynthesis; L-histidine biosynthesis; L-histidine from 5-phospho-alpha-D-ribose 1-diphosphate: step 2/9. This Sphingopyxis alaskensis (strain DSM 13593 / LMG 18877 / RB2256) (Sphingomonas alaskensis) protein is Phosphoribosyl-ATP pyrophosphatase.